A 365-amino-acid polypeptide reads, in one-letter code: Phosphatidylcholine:ceramide cholinephosphotransferase 2 (365 aa).

Basic and acidic residues predominate over residues 1 to 14 (MDIIETAKLEEHLE). Residues 1-52 (MDIIETAKLEEHLENQPSDPTNTYTRPTEPVEEENKNGNGKPKSLSSGLRKG) are disordered. The span at 15-26 (NQPSDPTNTYTR) shows a compositional bias: polar residues. 5 helical membrane-spanning segments follow: residues 80–100 (GIAF…ITVV), 128–148 (FSVS…QWLF), 159–179 (FCFI…VTTL), 218–240 (HILC…YLFI), and 248–268 (FWWY…CILV). H229 is an active-site residue. Active-site residues include H272 and D276. Residues 273-290 (YTVDVIIAYYITTRLFWW) traverse the membrane as a helical segment. Residues 291-365 (YHSMANEKNL…KIGEDNEKST (75 aa)) lie on the Cytoplasmic side of the membrane. Residues C331, C332, C343, and C348 are each lipidated (S-palmitoyl cysteine).

Belongs to the sphingomyelin synthase family. Palmitoylated on Cys-331, Cys-332, Cys-343 and Cys-348; which plays an important role in plasma membrane localization.

The protein localises to the cell membrane. It is found in the golgi apparatus membrane. It catalyses the reaction an N-acylsphing-4-enine + a 1,2-diacyl-sn-glycero-3-phosphocholine = a sphingomyelin + a 1,2-diacyl-sn-glycerol. The catalysed reaction is an N-acylsphinganine + a 1,2-diacyl-sn-glycero-3-phosphocholine = an N-acylsphinganine-1-phosphocholine + a 1,2-diacyl-sn-glycerol. It carries out the reaction an N-acyl-(4R)-4-hydroxysphinganine + a 1,2-diacyl-sn-glycero-3-phosphocholine = an N-acyl-(4R)-4-hydroxysphinganine-phosphocholine + a 1,2-diacyl-sn-glycerol. The enzyme catalyses an N-acylsphing-4-enine + a 1,2-diacyl-sn-glycero-3-phosphoethanolamine = an N-acylsphing-4-enine 1-phosphoethanolamine + a 1,2-diacyl-sn-glycerol. It catalyses the reaction an N-acylsphinganine + a 1,2-diacyl-sn-glycero-3-phosphoethanolamine = an N-acylsphinganine-1-phosphoethanolamine + a 1,2-diacyl-sn-glycerol. The catalysed reaction is an N-acyl-(4R)-4-hydroxysphinganine + a 1,2-diacyl-sn-glycero-3-phosphoethanolamine = an N-acyl-(4R)-4-hydroxysphinganine-1-phosphoethanolamine + a 1,2-diacyl-sn-glycerol. It carries out the reaction 1,2-dihexadecanoyl-sn-glycero-3-phosphocholine + an N-acylsphing-4-enine = 1,2-dihexadecanoyl-sn-glycerol + a sphingomyelin. The enzyme catalyses 1-(9Z-octadecenoyl)-2-acyl-sn-3-glycerol + a sphingomyelin = a 1-(9Z-octadecenoyl)-2-acyl-sn-glycero-3-phosphocholine + an N-acylsphing-4-enine. It catalyses the reaction N-hexadecanoylsphinganine + a 1,2-diacyl-sn-glycero-3-phosphocholine = N-hexadecanoyl-sphinganine-1-phosphocholine + a 1,2-diacyl-sn-glycerol. The catalysed reaction is N-hexadecanoyl-(4R)-hydroxysphinganine + a 1,2-diacyl-sn-glycero-3-phosphocholine = N-hexadecanoyl-(4R)-hydroxysphinganine-phosphocholine + a 1,2-diacyl-sn-glycerol. It carries out the reaction N-hexadecanoylsphinganine + a 1,2-diacyl-sn-glycero-3-phosphoethanolamine = N-hexadecanoyl-sphinganine-1-phosphoethanolamine + a 1,2-diacyl-sn-glycerol. The enzyme catalyses N-hexadecanoyl-(4R)-hydroxysphinganine + a 1,2-diacyl-sn-glycero-3-phosphoethanolamine = N-hexadecanoyl-(4R)-hydroxysphinganine-1-phosphoethanolamine + a 1,2-diacyl-sn-glycerol. It participates in sphingolipid metabolism. Its function is as follows. Sphingomyelin synthase that primarily contributes to sphingomyelin synthesis and homeostasis at the plasma membrane. Catalyzes the reversible transfer of phosphocholine moiety in sphingomyelin biosynthesis: in the forward reaction transfers phosphocholine head group of phosphatidylcholine (PC) on to ceramide (CER) to form ceramide phosphocholine (sphingomyelin, SM) and diacylglycerol (DAG) as by-product, and in the reverse reaction transfers phosphocholine from SM to DAG to form PC and CER. The direction of the reaction appears to depend on the levels of CER and DAG in the plasma membrane. Does not use free phosphorylcholine or CDP-choline as donors. Can also transfer phosphoethanolamine head group of phosphatidylethanolamine (PE) on to ceramide (CER) to form ceramide phosphoethanolamine (CPE). Regulates receptor-mediated signal transduction via mitogenic DAG and proapoptotic CER, as well as via SM, a structural component of membrane rafts that serve as platforms for signal transduction and protein sorting. To a lesser extent, plays a role in secretory transport via regulation of DAG pool at the Golgi apparatus and its downstream effects on PRKD1. Required for normal bone matrix mineralization. This is Phosphatidylcholine:ceramide cholinephosphotransferase 2 (SGMS2) from Macaca fascicularis (Crab-eating macaque).